The following is a 151-amino-acid chain: GNKERTFIAVKPDGVQRCIVGEVIKRFEQKGFKLVAMKFLQAPKDLLEKHYCELSDKPFYPKLIKYMSSGPVVAMVWEGLNVVKTGRVMLGETNPADSKPGTIRGDFCIQVGRNIIHGSDSVESAKKEISLWFKREELVEYQNCAQDWIYE.

K11, F59, R87, T93, R104, and N114 together coordinate ATP. H117 (pros-phosphohistidine intermediate) is an active-site residue.

This sequence belongs to the NDK family. As to quaternary structure, homohexamer. Mg(2+) serves as cofactor.

It carries out the reaction a 2'-deoxyribonucleoside 5'-diphosphate + ATP = a 2'-deoxyribonucleoside 5'-triphosphate + ADP. The enzyme catalyses a ribonucleoside 5'-diphosphate + ATP = a ribonucleoside 5'-triphosphate + ADP. In terms of biological role, major role in the synthesis of nucleoside triphosphates other than ATP. The ATP gamma phosphate is transferred to the NDP beta phosphate via a ping-pong mechanism, using a phosphorylated active-site intermediate. The polypeptide is Nucleoside diphosphate kinase (Ginglymostoma cirratum (Nurse shark)).